A 291-amino-acid polypeptide reads, in one-letter code: Phycobilisome 32.1 kDa linker polypeptide, phycocyanin-associated, rod 1 (291 aa).

In terms of domain architecture, PBS-linker spans 2 to 179 (AITTAASRLG…LYRGYANSDR (178 aa)). The 53-residue stretch at 236–288 (SKLFRVEITAISAPGYPKVRRSNKAVIVPFEQLNQTLQQINRLGGKVASITPA) folds into the CpcD-like domain.

It belongs to the phycobilisome linker protein family. As to quaternary structure, part of 2 PBS rod complexes, the conventional CpcG-PBS rod and a photosystem I-specific CpcL-PBS rod, both of which include ferredoxin--NADP reductase (petH). CpcG-PBS has on average 3 stacked phycocyanin hexamers (PC, CpcA and CpcB). Linker CpcG connects the PC stack to the thylakoid, the hexamers are linked by 1 copy of CpcC1, 1 copy of CpcC2 and the stack is terminated by a single copy of CpcD. The CpcL-PBS has on average 5 stacked phycocyanin hexamers (PC, CpcA and CpcB). Linker CpcL connects the PC stack to the thylakoid, the hexamers are linked by 1 copy of CpcC1, 3 copies of CpcC2 and the stack is terminated by a single copy of CpcD.

It localises to the cellular thylakoid membrane. Rod linker protein, connecting hexameric phycocyanin (PC, made by cpcA and cpcB) rods in the phycobilisome (PBS). PC is the major phycobiliprotein in PBS rods. Linker polypeptides determine the state of aggregation and the location of the disk-shaped phycobiliprotein units within the phycobilisome and modulate their spectroscopic properties in order to mediate a directed and optimal energy transfer. The sequence is that of Phycobilisome 32.1 kDa linker polypeptide, phycocyanin-associated, rod 1 (cpcC1) from Synechocystis sp. (strain ATCC 27184 / PCC 6803 / Kazusa).